Here is a 156-residue protein sequence, read N- to C-terminus: Small ribosomal subunit protein uS7 (156 aa).

The protein belongs to the universal ribosomal protein uS7 family. As to quaternary structure, part of the 30S ribosomal subunit. Contacts proteins S9 and S11.

One of the primary rRNA binding proteins, it binds directly to 16S rRNA where it nucleates assembly of the head domain of the 30S subunit. Is located at the subunit interface close to the decoding center, probably blocks exit of the E-site tRNA. The polypeptide is Small ribosomal subunit protein uS7 (Pseudomonas fluorescens (strain SBW25)).